A 113-amino-acid chain; its full sequence is Hydrogenase maturation factor HypA (113 aa).

Histidine 2 is a Ni(2+) binding site. Zn(2+) is bound by residues cysteine 73, cysteine 76, cysteine 89, and cysteine 92.

Belongs to the HypA/HybF family.

In terms of biological role, involved in the maturation of [NiFe] hydrogenases. Required for nickel insertion into the metal center of the hydrogenase. The protein is Hydrogenase maturation factor HypA of Moorella thermoacetica (strain ATCC 39073 / JCM 9320).